Here is a 655-residue protein sequence, read N- to C-terminus: Threonine--tRNA ligase (655 aa).

The 66-residue stretch at 1-66 (MIDLVFPDGS…TGERKFEILT (66 aa)) folds into the TGS domain. The interval 248-540 (DHRKLGKTMD…LLENFAGALP (293 aa)) is catalytic. Cysteine 340, histidine 391, and histidine 517 together coordinate Zn(2+).

It belongs to the class-II aminoacyl-tRNA synthetase family. As to quaternary structure, homodimer. Zn(2+) is required as a cofactor.

The protein localises to the cytoplasm. It carries out the reaction tRNA(Thr) + L-threonine + ATP = L-threonyl-tRNA(Thr) + AMP + diphosphate + H(+). Its function is as follows. Catalyzes the attachment of threonine to tRNA(Thr) in a two-step reaction: L-threonine is first activated by ATP to form Thr-AMP and then transferred to the acceptor end of tRNA(Thr). Also edits incorrectly charged L-seryl-tRNA(Thr). This Caulobacter vibrioides (strain ATCC 19089 / CIP 103742 / CB 15) (Caulobacter crescentus) protein is Threonine--tRNA ligase.